Consider the following 576-residue polypeptide: DNA mismatch repair protein MutL (576 aa).

The protein belongs to the DNA mismatch repair MutL/HexB family.

Its function is as follows. This protein is involved in the repair of mismatches in DNA. It is required for dam-dependent methyl-directed DNA mismatch repair. May act as a 'molecular matchmaker', a protein that promotes the formation of a stable complex between two or more DNA-binding proteins in an ATP-dependent manner without itself being part of a final effector complex. The chain is DNA mismatch repair protein MutL from Chlamydia trachomatis serovar A (strain ATCC VR-571B / DSM 19440 / HAR-13).